A 342-amino-acid chain; its full sequence is Protein RecA (342 aa).

Belongs to the RecA family.

The protein resides in the cytoplasm. Can catalyze the hydrolysis of ATP in the presence of single-stranded DNA, the ATP-dependent uptake of single-stranded DNA by duplex DNA, and the ATP-dependent hybridization of homologous single-stranded DNAs. It interacts with LexA causing its activation and leading to its autocatalytic cleavage. This chain is Protein RecA, found in Pectobacterium carotovorum (Erwinia carotovora).